Reading from the N-terminus, the 559-residue chain is BTB/POZ domain-containing protein At5g47800 (559 aa).

Residues 28–96 (NDLVIRINNT…CYDITINLSA (69 aa)) form the BTB domain. In terms of domain architecture, NPH3 spans 199-476 (DWWTEDISDL…VQALFFDQES (278 aa)). Y417 carries the post-translational modification Phosphotyrosine. The span at 477–489 (GSKGASSRSESQE) shows a compositional bias: low complexity. Disordered stretches follow at residues 477–502 (GSKGASSRSESQELFTRGKETPTDEH) and 524–559 (EGCKRGEEKTRSSTDPKKIVWKGTGSEHKHHISRDR). 2 stretches are compositionally biased toward basic and acidic residues: residues 492–502 (TRGKETPTDEH) and 524–541 (EGCKRGEEKTRSSTDPKK).

It belongs to the NPH3 family.

It functions in the pathway protein modification; protein ubiquitination. Functionally, may act as a substrate-specific adapter of an E3 ubiquitin-protein ligase complex (CUL3-RBX1-BTB) which mediates the ubiquitination and subsequent proteasomal degradation of target proteins. The polypeptide is BTB/POZ domain-containing protein At5g47800 (Arabidopsis thaliana (Mouse-ear cress)).